The sequence spans 335 residues: Phospho-N-acetylmuramoyl-pentapeptide-transferase (335 aa).

10 helical membrane-spanning segments follow: residues 3–23, 53–73, 78–98, 118–138, 143–163, 174–194, 200–220, 226–246, 251–271, and 314–334; these read LTIL…PHFI, GGTV…LVYF, SLGL…IGFL, FTLQ…PSGI, VFGY…FWVV, GIDG…GVIA, FDVL…FLFN, IFMG…ISIA, WTLL…MLQV, and VDAF…AILY.

It belongs to the glycosyltransferase 4 family. MraY subfamily. It depends on Mg(2+) as a cofactor.

The protein resides in the cell membrane. It carries out the reaction UDP-N-acetyl-alpha-D-muramoyl-L-alanyl-gamma-D-glutamyl-L-lysyl-D-alanyl-D-alanine + di-trans,octa-cis-undecaprenyl phosphate = Mur2Ac(oyl-L-Ala-gamma-D-Glu-L-Lys-D-Ala-D-Ala)-di-trans,octa-cis-undecaprenyl diphosphate + UMP. Its pathway is cell wall biogenesis; peptidoglycan biosynthesis. Functionally, catalyzes the initial step of the lipid cycle reactions in the biosynthesis of the cell wall peptidoglycan: transfers peptidoglycan precursor phospho-MurNAc-pentapeptide from UDP-MurNAc-pentapeptide onto the lipid carrier undecaprenyl phosphate, yielding undecaprenyl-pyrophosphoryl-MurNAc-pentapeptide, known as lipid I. In Streptococcus equi subsp. zooepidemicus (strain MGCS10565), this protein is Phospho-N-acetylmuramoyl-pentapeptide-transferase.